We begin with the raw amino-acid sequence, 684 residues long: Agnestins biosynthesis cluster transcription factor AgnL11 (684 aa).

Residues 25–51 constitute a DNA-binding region (zn(2)-C6 fungal-type); it reads CHFCRTKKLKCDRRFPCSNCRARRLSC. Residues 76–103 adopt a coiled-coil conformation; it reads NEELSENINELKARLQRLEELISVNAEE. Residues 601–644 form a disordered region; the sequence is KGSASARKDKNPIHGDTDRATPPGSSNLPQHDKSSSSSPAPPVW. Positions 606 to 619 are enriched in basic and acidic residues; it reads ARKDKNPIHGDTDR.

The protein localises to the nucleus. In terms of biological role, transcription factor that regulates the expression of the gene cluster that mediates the biosynthesis of agnestins, dihydroxy-xanthone metabolites. The chain is Agnestins biosynthesis cluster transcription factor AgnL11 from Paecilomyces divaricatus (Penicillium divaricatum).